Consider the following 212-residue polypeptide: MNLLIMGLPGAGKGTQAAKIVEQFHVAHISTGDMFRAAMANQTEMGVLAKSYIDKGELVPDEVTNGIVKERLSQDDIKETGFLLDGYPRTIEQAHALDKTLAELGIELEGIINIEVNPDSLLERLSGRIIHRVTGETFHKVFNPPVDYKEEDYYQREDDKPETVKRRLDVNIAQGEPIIAHYRAKGLVHDIEGNQDINDVFSDIEKVLTNLK.

10–15 (GAGKGT) contributes to the ATP binding site. Positions 30–59 (STGDMFRAAMANQTEMGVLAKSYIDKGELV) are NMP. Residues Thr31, Arg36, 57–59 (ELV), 86–89 (GYPR), and Gln93 contribute to the AMP site. Residues 127–159 (GRIIHRVTGETFHKVFNPPVDYKEEDYYQREDD) form an LID region. Residues Arg128 and 137–138 (TF) each bind ATP. Residues Arg156 and Arg167 each coordinate AMP. Gln195 serves as a coordination point for ATP.

This sequence belongs to the adenylate kinase family. As to quaternary structure, monomer.

It localises to the cytoplasm. It carries out the reaction AMP + ATP = 2 ADP. It functions in the pathway purine metabolism; AMP biosynthesis via salvage pathway; AMP from ADP: step 1/1. Functionally, catalyzes the reversible transfer of the terminal phosphate group between ATP and AMP. Plays an important role in cellular energy homeostasis and in adenine nucleotide metabolism. The polypeptide is Adenylate kinase (Streptococcus pneumoniae (strain JJA)).